The sequence spans 383 residues: MHSLDTYAADKIERLEAASLLRRLKPTQRSAGVVVERDGRKLLSFSCNDYLGLAHHPKVKAAAQAAIETYGAGSGASRLVTGDHPLLSELEARLARLKGAEACVVFGSGYLANTGLIPTFAGKGDIVLLDELAHACIWAGAQLSGARIIPFAHNDTDHLAALLAEHRSSARHAIVATDGVFSMDGDIAPLDWLSAVCEANDAWLLSDDAHGVGVLAQGKGSAALFPEAQIPFQMGTLSKALGSYGGYVCASQAVVDLLKTRARTLVYSTGLPPAAAAAALAALDIVEAEPALTALPLAKARAFTQAVGLPPAASPIVPVIIGEAQDALDASRALEAEGFLVVAIRPPTVPAGAARLRIAFSAEHPDAEIARLAELVRPYVKAR.

Residue Arg-22 coordinates substrate. Gly-109–Tyr-110 is a pyridoxal 5'-phosphate binding site. A substrate-binding site is contributed by His-134. Pyridoxal 5'-phosphate is bound by residues Ser-182, Asp-207 to His-210, and Thr-236 to Lys-239. Position 239 is an N6-(pyridoxal phosphate)lysine (Lys-239). Residue Thr-348 coordinates substrate.

This sequence belongs to the class-II pyridoxal-phosphate-dependent aminotransferase family. BioF subfamily. As to quaternary structure, homodimer. Pyridoxal 5'-phosphate serves as cofactor.

It carries out the reaction 6-carboxyhexanoyl-[ACP] + L-alanine + H(+) = (8S)-8-amino-7-oxononanoate + holo-[ACP] + CO2. It functions in the pathway cofactor biosynthesis; biotin biosynthesis. Its function is as follows. Catalyzes the decarboxylative condensation of pimeloyl-[acyl-carrier protein] and L-alanine to produce 8-amino-7-oxononanoate (AON), [acyl-carrier protein], and carbon dioxide. The protein is Putative 8-amino-7-oxononanoate synthase (bioF) of Caulobacter sp. (strain K31).